Here is a 457-residue protein sequence, read N- to C-terminus: ATP synthase subunit beta (457 aa).

ATP is bound at residue 147–154; the sequence is GGAGVGKT.

This sequence belongs to the ATPase alpha/beta chains family. F-type ATPases have 2 components, CF(1) - the catalytic core - and CF(0) - the membrane proton channel. CF(1) has five subunits: alpha(3), beta(3), gamma(1), delta(1), epsilon(1). CF(0) has three main subunits: a(1), b(2) and c(9-12). The alpha and beta chains form an alternating ring which encloses part of the gamma chain. CF(1) is attached to CF(0) by a central stalk formed by the gamma and epsilon chains, while a peripheral stalk is formed by the delta and b chains.

The protein resides in the cell inner membrane. The enzyme catalyses ATP + H2O + 4 H(+)(in) = ADP + phosphate + 5 H(+)(out). In terms of biological role, produces ATP from ADP in the presence of a proton gradient across the membrane. The catalytic sites are hosted primarily by the beta subunits. This is ATP synthase subunit beta from Actinobacillus pleuropneumoniae serotype 3 (strain JL03).